Here is a 192-residue protein sequence, read N- to C-terminus: Peptidyl-tRNA hydrolase (192 aa).

Position 14 (Tyr14) interacts with tRNA. Catalysis depends on His19, which acts as the Proton acceptor. TRNA contacts are provided by Tyr66 and Asn68.

The protein belongs to the PTH family. In terms of assembly, monomer.

Its subcellular location is the cytoplasm. It carries out the reaction an N-acyl-L-alpha-aminoacyl-tRNA + H2O = an N-acyl-L-amino acid + a tRNA + H(+). Its function is as follows. Hydrolyzes ribosome-free peptidyl-tRNAs (with 1 or more amino acids incorporated), which drop off the ribosome during protein synthesis, or as a result of ribosome stalling. In terms of biological role, catalyzes the release of premature peptidyl moieties from peptidyl-tRNA molecules trapped in stalled 50S ribosomal subunits, and thus maintains levels of free tRNAs and 50S ribosomes. This Coprothermobacter proteolyticus (strain ATCC 35245 / DSM 5265 / OCM 4 / BT) protein is Peptidyl-tRNA hydrolase.